A 257-amino-acid polypeptide reads, in one-letter code: Acetylglutamate kinase (257 aa).

Residues 43–44, Arg65, and Asn157 contribute to the substrate site; that span reads GG. ATP-binding positions include 180 to 185 and 208 to 210; these read DVSGIL and IIT.

Belongs to the acetylglutamate kinase family. ArgB subfamily. Homodimer.

The protein localises to the cytoplasm. The catalysed reaction is N-acetyl-L-glutamate + ATP = N-acetyl-L-glutamyl 5-phosphate + ADP. The protein operates within amino-acid biosynthesis; L-arginine biosynthesis; N(2)-acetyl-L-ornithine from L-glutamate: step 2/4. In terms of biological role, catalyzes the ATP-dependent phosphorylation of N-acetyl-L-glutamate. The protein is Acetylglutamate kinase of Pectobacterium atrosepticum (strain SCRI 1043 / ATCC BAA-672) (Erwinia carotovora subsp. atroseptica).